The sequence spans 20 residues: L-amino-acid oxidase L2 (20 aa).

It belongs to the flavin monoamine oxidase family. FIG1 subfamily. In terms of assembly, monomer. This is in contrast with most of its orthologs, that are non-covalently linked homodimers. FAD is required as a cofactor. In terms of processing, N-glycosylated. As to expression, expressed by the venom gland.

Its subcellular location is the secreted. It carries out the reaction an L-alpha-amino acid + O2 + H2O = a 2-oxocarboxylate + H2O2 + NH4(+). It catalyses the reaction L-leucine + O2 + H2O = 4-methyl-2-oxopentanoate + H2O2 + NH4(+). The catalysed reaction is L-phenylalanine + O2 + H2O = 3-phenylpyruvate + H2O2 + NH4(+). The enzyme catalyses L-tryptophan + O2 + H2O = indole-3-pyruvate + H2O2 + NH4(+). It carries out the reaction L-methionine + O2 + H2O = 4-methylsulfanyl-2-oxobutanoate + H2O2 + NH4(+). It catalyses the reaction L-isoleucine + O2 + H2O = (S)-3-methyl-2-oxopentanoate + H2O2 + NH4(+). The catalysed reaction is L-tyrosine + O2 + H2O = 3-(4-hydroxyphenyl)pyruvate + H2O2 + NH4(+). In terms of biological role, catalyzes an oxidative deamination of predominantly hydrophobic and aromatic L-amino acids, thus producing hydrogen peroxide that may contribute to the diverse toxic effects of this enzyme. Is active on L-Ile, L-Leu, L-Met, L-Phe, L-Trp, and L-Tyr. Exhibits diverse biological activities, such as hemorrhage, hemolysis, edema, apoptosis of vascular endothelial cells or tumor cell lines, antibacterial and antiparasitic activities, as well as regulation of platelet aggregation. Its effect on platelets is controversial, since it either induces aggregation or inhibits agonist-induced aggregation. These different effects are probably due to different experimental conditions. This is L-amino-acid oxidase L2 from Daboia russelii (Russel's viper).